A 1139-amino-acid chain; its full sequence is Solute carrier family 12 member 5 (1139 aa).

Disordered stretches follow at residues 1 to 63 and 92 to 116; these read MSRR…GKEY and TNLP…KPVQ. The Cytoplasmic portion of the chain corresponds to 1-98; sequence MSRRFTVTSL…ANYTNLPQGS (98 aa). A compositionally biased stretch (basic and acidic residues) spans 19–45; it reads PDPESRRHSVADPRHLPGEDVKGDGNP. Residues 46–55 are compositionally biased toward polar residues; that stretch reads KESSPFINST. Threonine 57 bears the Phosphothreonine mark. The segment covering 98 to 111 has biased composition (basic and acidic residues); that stretch reads SREHEEAENNEGGK. A discontinuously helical membrane pass occupies residues 99-120; sequence REHEEAENNEGGKKKPVQAPRM. Position 113 (lysine 113) interacts with K(+). The Extracellular segment spans residues 121-129; it reads GTFMGVYLP. The helical transmembrane segment at 130-151 threads the bilayer; it reads CLQNIFGVILFLRLTWVVGIAG. Over 152–174 the chain is Cytoplasmic; sequence IMESFCMVFICCSCTMLTAISMS. A helical transmembrane segment spans residues 175–203; that stretch reads AIATNGVVPAGGSYYMISRSLGPEFGGAV. Alanine 184 contributes to the chloride binding site. Topologically, residues 204 to 229 are extracellular; the sequence is GLCFYLGTTFAGAMYILGTIEILLAY. 2 consecutive transmembrane segments (helical) span residues 230–250 and 251–276; these read LFPA…AAML and NNMR…KYVN. The Extracellular segment spans residues 277–402; that stretch reads KFALVFLGCV…ERSGMTSVGL (126 aa). A disulfide bond links cysteine 310 and cysteine 325. 4 N-linked (GlcNAc...) asparagine glycosylation sites follow: asparagine 314, asparagine 333, asparagine 351, and asparagine 362. Cysteine 345 and cysteine 354 form a disulfide bridge. A helical transmembrane segment spans residues 403 to 420; the sequence is ADGTPIDMDHPYVFSDMT. Residue methionine 410 coordinates K(+). Residues tyrosine 414 and valine 415 each contribute to the chloride site. The Cytoplasmic segment spans residues 421-429; that stretch reads SYFTLLVGI. A helical transmembrane segment spans residues 430 to 453; sequence YFPSVTGIMAGSNRSGDLRDAQKS. Aspartate 446 is a K(+) binding site. Residues 454–485 are Extracellular-facing; that stretch reads IPTGTILAIATTSAVYISSVVLFGACIEGVVL. The helical transmembrane segment at 486–513 threads the bilayer; the sequence is RDKFGEAVNGNLVVGTLAWPSPWVIVIG. Over 514–534 the chain is Cytoplasmic; the sequence is SFFSTCGAGLQSLTGAPRLLQ. Helical transmembrane passes span 535 to 555 and 556 to 578; these read AISR…KANG and EPTW…ASLD. Glutamate 569 contacts chloride. Topologically, residues 579 to 592 are cytoplasmic; it reads EVAPILSMFFLMCY. 2 helical membrane passes run 593–615 and 616–632; these read MFVN…PRFR and YYHW…CLAL. At 633-1139 the chain is on the cytoplasmic side; that stretch reads MFICSWYYAL…GGREVITIYS (507 aa). The segment at 667 to 681 is scissor helix; that stretch reads GIRGLSLSAARYALL. Residue threonine 929 is modified to Phosphothreonine; by OXSR1 and STK39. The tract at residues 942–1052 is disordered; the sequence is MHLTKNERER…GPSPVSSEGI (111 aa). Positions 945 to 962 are enriched in basic and acidic residues; that stretch reads TKNEREREIQSITDESRG. Positions 982–994 are enriched in acidic residues; it reads TAGDSEEKPEEEV. Residues 1003–1012 show a composition bias toward low complexity; that stretch reads PSCPSSSPSP. Over residues 1023–1042 the composition is skewed to basic and acidic residues; the sequence is DPEKVHLTWTKDKSVAEKNK. Phosphothreonine; by OXSR1 and STK39 is present on threonine 1030. Phosphoserine is present on residues serine 1045, serine 1048, and serine 1049.

The protein belongs to the SLC12A transporter family. K/Cl co-transporter subfamily. Homodimer; adopts a domain-swap conformation at the scissor helices connecting the transmembrane domain and C-terminal domain. Heterodimer with K-Cl cotransporters SLC12A6 and SLC12A7. Interacts with AP2A1. In terms of processing, phosphorylated at Thr-929 and Thr-1030 by OXSR1/OSR1 and STK39/SPAK downstream of WNK kinases (WNK1, WNK2, WNK3 or WNK4), inhibiting the potassium-chloride cotransport activity. In terms of tissue distribution, brain specific. Detected in neuronal cells.

The protein localises to the cell membrane. It localises to the cell projection. The protein resides in the dendrite. It carries out the reaction K(+)(in) + chloride(in) = K(+)(out) + chloride(out). Its activity is regulated as follows. Inhibited following phosphorylation by OXSR1/OSR1 and STK39/SPAK: phosphorylation takes place downstream of WNK kinases (WNK1, WNK2, WNK3 or WNK4) in response to hyperosmotic stress and subsequent cell shrinkage. Functionally, mediates electroneutral potassium-chloride cotransport in mature neurons and is required for neuronal Cl(-) homeostasis. As major extruder of intracellular chloride, it establishes the low neuronal Cl(-) levels required for chloride influx after binding of GABA-A and glycine to their receptors, with subsequent hyperpolarization and neuronal inhibition. Involved in the regulation of dendritic spine formation and maturation. This chain is Solute carrier family 12 member 5, found in Homo sapiens (Human).